The sequence spans 517 residues: Cytochrome P450 monooxygenase bsc11 (517 aa).

A helical transmembrane segment spans residues 16-33 (ALPLTCTGLIIIFAFYLS). Asparagine 204 is a glycosylation site (N-linked (GlcNAc...) asparagine). Cysteine 448 is a binding site for heme.

It belongs to the cytochrome P450 family. The cofactor is heme.

The protein resides in the membrane. It participates in mycotoxin biosynthesis. In terms of biological role, cytochrome P450 monooxygenase; part of the gene cluster that mediates the biosynthesis of the diterpene glucoside brassicicene C. In the first step of the brassicicene C biosynthesis, the bifunctional diterpene synthase bsc8 that possesses both prenyl transferase and terpene cyclase activity, converts isopentenyl diphosphate and dimethylallyl diphosphate into geranylgeranyl diphosphate (GGDP) that is further converted into fusicocca-2,10(14)-diene, the first precursor for brassicicene C. Fusicocca-2,10(14)-diene is then substrate of cytochrome P450 monooxygenase bsc1 for hydroxylation at the C-8 position. Oxidation at C-16 position to aldehyde is then catalyzed by the cytochrome P450 monooyxygenase bsc7, yielding fusicocca-2,10(14)-diene-8-beta,16-diol. Follows the isomerization of the double bond and reduction of aldehyde to alcohol catalyzed by the short-chain dehydrogenase/reductase bsc3 to yield the diol compound fusicocca-1,10(14)-diene-8 beta,16-diol. The next step is the oxidation at the C-3 position of fusicocca-2,10(14)-diene-8-beta,16-diol catalyzed by the alpha-ketoglutarate dependent dioxygenase bsc9, to produce a triol compound. Methylation of the hydroxy group at position 16 is performed by the methyltransferase bsc6. 16-O-methylation is followed by oxidation at the C-13 position to ketone and an alkyl shift of the methyl group leads to brassicicene C. Although the probable acetyltransferase bsc4 is included in the gene cluster, no acetylation reactions are necessary for brassicicene C biosynthesis. However, the fact that brassicicene E, which is a structurally related compound having an acetoxy group at position 12, was previously isolated from another strain of A.brassicicola suggests that the ATCC 96836 strain might also produce a small amount of brassicicene E. The chain is Cytochrome P450 monooxygenase bsc11 from Alternaria brassicicola (Dark leaf spot agent).